The primary structure comprises 3183 residues: WD repeat- and FYVE domain-containing protein 4 (3183 aa).

Positions 1–15 (MEAEDLSKTEDRPED) are enriched in basic and acidic residues. 4 disordered regions span residues 1-37 (MEAE…EGQS), 790-811 (AGQE…GKFK), 938-977 (KSLH…QALR), and 1828-1852 (KETT…HAAE). The segment covering 1832–1852 (SESSRNTSSPGASAEASHAAE) has biased composition (low complexity). A BEACH-type PH domain is found at 2383 to 2508 (LDGEKVSQKV…DRSKALKSFS (126 aa)). The BEACH domain occupies 2525-2819 (NLRKHPGFDR…QIFTKPHPSR (295 aa)). The tract at residues 2812–2836 (FTKPHPSRNTTGKNPGPGKDASTPV) is disordered. WD repeat units lie at residues 2930–2969 (LAAW…GRPR), 2979–3018 (GHTQ…RVAC), 3021–3060 (VHRE…ASIT), 3070–3108 (TCCC…MPVP), and 3150–3183 (KASP…SADG).

As to quaternary structure, interacts with HSP90AB1. In terms of tissue distribution, highly expressed in immune tissues, especially B lymphocytes.

Its subcellular location is the early endosome. It localises to the endoplasmic reticulum. Functionally, plays a critical role in the regulation of cDC1-mediated cross-presentation of viral and tumor antigens in dendritic cells. Mechanistically, acts near the plasma membrane and interacts with endosomal membranes to promote endosomal-to-cytosol antigen trafficking. Also plays a role in B-cell survival through regulation of autophagy. The chain is WD repeat- and FYVE domain-containing protein 4 from Mus musculus (Mouse).